We begin with the raw amino-acid sequence, 122 residues long: Large ribosomal subunit protein uL18 (122 aa).

This sequence belongs to the universal ribosomal protein uL18 family. As to quaternary structure, part of the 50S ribosomal subunit; part of the 5S rRNA/L5/L18/L25 subcomplex. Contacts the 5S and 23S rRNAs.

In terms of biological role, this is one of the proteins that bind and probably mediate the attachment of the 5S RNA into the large ribosomal subunit, where it forms part of the central protuberance. In Desulforapulum autotrophicum (strain ATCC 43914 / DSM 3382 / VKM B-1955 / HRM2) (Desulfobacterium autotrophicum), this protein is Large ribosomal subunit protein uL18.